Reading from the N-terminus, the 421-residue chain is AA11 family lytic polysaccharide monooxygenase (421 aa).

The signal sequence occupies residues 1-19 (MFSKAFLSAALLGAAAVEG). Residues histidine 20, histidine 79, and glutamate 93 each contribute to the Cu(+) site. Intrachain disulfides connect cysteine 48–cysteine 162, cysteine 84–cysteine 110, and cysteine 201–cysteine 235. Residue asparagine 117 is glycosylated (N-linked (GlcNAc...) asparagine). The tract at residues 231–349 (GSQACTGTPT…SSSSSSSGAL (119 aa)) is disordered. Over residues 247–285 (TAGSSGSSGSSSGSSSGGSSSSAAGSGATAPPAPAVSST) the composition is skewed to low complexity. The span at 304–314 (SPAQPTHTSAP) shows a compositional bias: polar residues. Residues 315–349 (SGGSSSGSGSSSGSNSGSSSGSSSSSSSSSSSGAL) are compositionally biased toward low complexity.

Belongs to the polysaccharide monooxygenase AA11 family. It depends on Cu(2+) as a cofactor.

In terms of biological role, lytic polysaccharide monooxygenase (LPMO) that depolymerizes chitin via the oxidation of scissile beta-(1-4)-glycosidic bonds, yielding C1 or C4 oxidation products. Catalysis by LPMOs requires the reduction of the active-site copper from Cu(II) to Cu(I) by a reducing agent and H(2)O(2) or O(2) as a cosubstrate. Active on chitin but has no activity on other substrates, including diverse mannans, cellulose and starch (data not shown). Primary chain cleavage yields predominantly aldonic acid oligosaccharides with even-numbered degrees of polymerization. The protein is AA11 family lytic polysaccharide monooxygenase of Aspergillus oryzae (strain ATCC 42149 / RIB 40) (Yellow koji mold).